A 163-amino-acid polypeptide reads, in one-letter code: UPF0262 protein RPD_4278 (163 aa).

It belongs to the UPF0262 family.

In Rhodopseudomonas palustris (strain BisB5), this protein is UPF0262 protein RPD_4278.